The primary structure comprises 146 residues: Peptidyl-lysine N-acetyltransferase YiaC (146 aa).

Residues 1–143 enclose the N-acetyltransferase domain; the sequence is MIREAQRSEL…PTWIMSWPVV (143 aa).

It belongs to the acetyltransferase family.

The enzyme catalyses L-lysyl-[protein] + acetyl-CoA = N(6)-acetyl-L-lysyl-[protein] + CoA + H(+). In terms of biological role, N-epsilon-lysine acetyltransferase that catalyzes acetylation of a large number of proteins. Overexpression inhibits motility. This Escherichia coli (strain K12) protein is Peptidyl-lysine N-acetyltransferase YiaC (yiaC).